The chain runs to 331 residues: Pseudouridylate synthase TRUB2, mitochondrial (331 aa).

D98 functions as the Nucleophile in the catalytic mechanism. Residues 309–331 (STGQPWGLKDPSSTLELESCSGQ) are disordered. Residues 319–331 (PSSTLELESCSGQ) show a composition bias toward polar residues.

The protein belongs to the pseudouridine synthase TruB family. As to quaternary structure, forms a regulatory protein-RNA complex, consisting of RCC1L, NGRN, RPUSD3, RPUSD4, TRUB2, FASTKD2 and 16S mt-rRNA.

The protein localises to the mitochondrion matrix. It catalyses the reaction a uridine in mRNA = a pseudouridine in mRNA. The enzyme catalyses uridine(55) in tRNA = pseudouridine(55) in tRNA. Functionally, minor enzyme contributing to the isomerization of uridine to pseudouridine (pseudouridylation) of specific mitochondrial mRNAs (mt-mRNAs) such as COXI and COXIII mt-mRNAs. As a component of a functional protein-RNA module, consisting of RCC1L, NGRN, RPUSD3, RPUSD4, TRUB2, FASTKD2 and 16S mitochondrial ribosomal RNA (16S mt-rRNA), controls 16S mt-rRNA abundance and is required for intra-mitochondrial translation. Also catalyzes pseudouridylation of some tRNAs, including synthesis of pseudouridine(55) from uracil-55, in the psi GC loop of a subset of tRNAs. The polypeptide is Pseudouridylate synthase TRUB2, mitochondrial (Mus musculus (Mouse)).